Consider the following 236-residue polypeptide: tRNA (guanine-N(1)-)-methyltransferase (236 aa).

Residues Gly-113 and Ile-133–Leu-138 each bind S-adenosyl-L-methionine.

This sequence belongs to the RNA methyltransferase TrmD family. As to quaternary structure, homodimer.

It is found in the cytoplasm. It carries out the reaction guanosine(37) in tRNA + S-adenosyl-L-methionine = N(1)-methylguanosine(37) in tRNA + S-adenosyl-L-homocysteine + H(+). Its function is as follows. Specifically methylates guanosine-37 in various tRNAs. In Lachnospira eligens (strain ATCC 27750 / DSM 3376 / VPI C15-48 / C15-B4) (Eubacterium eligens), this protein is tRNA (guanine-N(1)-)-methyltransferase.